The primary structure comprises 250 residues: 5-oxoprolinase subunit A (250 aa).

This sequence belongs to the LamB/PxpA family. As to quaternary structure, forms a complex composed of PxpA, PxpB and PxpC.

It carries out the reaction 5-oxo-L-proline + ATP + 2 H2O = L-glutamate + ADP + phosphate + H(+). Catalyzes the cleavage of 5-oxoproline to form L-glutamate coupled to the hydrolysis of ATP to ADP and inorganic phosphate. This chain is 5-oxoprolinase subunit A, found in Staphylococcus aureus (strain Mu3 / ATCC 700698).